Consider the following 248-residue polypeptide: Phosphoribosyl isomerase A (248 aa).

The active-site Proton acceptor is the aspartate 14. The active-site Proton donor is the aspartate 133.

This sequence belongs to the HisA/HisF family.

The protein resides in the cytoplasm. It carries out the reaction 1-(5-phospho-beta-D-ribosyl)-5-[(5-phospho-beta-D-ribosylamino)methylideneamino]imidazole-4-carboxamide = 5-[(5-phospho-1-deoxy-D-ribulos-1-ylimino)methylamino]-1-(5-phospho-beta-D-ribosyl)imidazole-4-carboxamide. It catalyses the reaction N-(5-phospho-beta-D-ribosyl)anthranilate = 1-(2-carboxyphenylamino)-1-deoxy-D-ribulose 5-phosphate. It participates in amino-acid biosynthesis; L-histidine biosynthesis; L-histidine from 5-phospho-alpha-D-ribose 1-diphosphate: step 4/9. The protein operates within amino-acid biosynthesis; L-tryptophan biosynthesis; L-tryptophan from chorismate: step 3/5. Its function is as follows. Involved in both the histidine and tryptophan biosynthetic pathways. The protein is Phosphoribosyl isomerase A of Mycobacterium sp. (strain JLS).